The chain runs to 516 residues: AMP phosphorylase (516 aa).

Residues Gly169, 195 to 200, and Thr204 each bind AMP; that span reads SRAITG. Catalysis depends on Asp257, which acts as the Proton donor. AMP is bound by residues Ser265 and Lys289.

It belongs to the thymidine/pyrimidine-nucleoside phosphorylase family. Type 2 subfamily.

The enzyme catalyses AMP + phosphate = alpha-D-ribose 1,5-bisphosphate + adenine. The catalysed reaction is CMP + phosphate = cytosine + alpha-D-ribose 1,5-bisphosphate. It carries out the reaction UMP + phosphate = alpha-D-ribose 1,5-bisphosphate + uracil. Functionally, catalyzes the conversion of AMP and phosphate to adenine and ribose 1,5-bisphosphate (R15P). Exhibits phosphorylase activity toward CMP and UMP in addition to AMP. Functions in an archaeal AMP degradation pathway, together with R15P isomerase and RubisCO. The sequence is that of AMP phosphorylase from Methanospirillum hungatei JF-1 (strain ATCC 27890 / DSM 864 / NBRC 100397 / JF-1).